Consider the following 894-residue polypeptide: UPF0182 protein GSU2333 (894 aa).

The next 7 helical transmembrane spans lie at 6 to 26, 50 to 70, 98 to 118, 162 to 182, 203 to 223, 250 to 270, and 275 to 295; these read FLLIIAAVFVVLPAALSLITF, VGAGLASGLFMFAFAMVNLYF, MVQMVKPLSILAALVLSLLAG, KGFVAFTVLVTGIMVGAVYFF, LAILLGIFSLTLATGFYLDAV, ILTLATPLAGAVVAFGLWKGA, and LIPPIIVAAVYGIGIVGYPAM.

The protein belongs to the UPF0182 family.

It localises to the cell membrane. This is UPF0182 protein GSU2333 from Geobacter sulfurreducens (strain ATCC 51573 / DSM 12127 / PCA).